The chain runs to 155 residues: Ribonuclease H (155 aa).

Residues 4–145 (DISKVVIYTD…ADKLAVQGRQ (142 aa)) enclose the RNase H type-1 domain. Asp-13, Glu-51, Asp-73, and Asp-137 together coordinate Mg(2+).

It belongs to the RNase H family. Monomer. Mg(2+) is required as a cofactor.

The protein localises to the cytoplasm. The enzyme catalyses Endonucleolytic cleavage to 5'-phosphomonoester.. In terms of biological role, endonuclease that specifically degrades the RNA of RNA-DNA hybrids. The sequence is that of Ribonuclease H from Rickettsia bellii (strain RML369-C).